Here is a 200-residue protein sequence, read N- to C-terminus: Small ribosomal subunit protein uS4 (200 aa).

The disordered stretch occupies residues 22–42; the sequence is TGKELEKRPYAPGPHGPNQRK. The region spanning 92 to 152 is the S4 RNA-binding domain; the sequence is ARLDNLVYRM…EKSNSLVVVK (61 aa).

It belongs to the universal ribosomal protein uS4 family. As to quaternary structure, part of the 30S ribosomal subunit. Contacts protein S5. The interaction surface between S4 and S5 is involved in control of translational fidelity.

One of the primary rRNA binding proteins, it binds directly to 16S rRNA where it nucleates assembly of the body of the 30S subunit. In terms of biological role, with S5 and S12 plays an important role in translational accuracy. This is Small ribosomal subunit protein uS4 from Bacillus cereus (strain B4264).